The following is a 509-amino-acid chain: Cytochrome P450 monooxygenase aba1 (509 aa).

The signal sequence occupies residues 1–31 (MSNSILNLGSFACLLSLGSIVLWYTISAVLA). Residue asparagine 402 is glycosylated (N-linked (GlcNAc...) asparagine). Heme is bound at residue cysteine 451. N-linked (GlcNAc...) asparagine glycosylation is present at asparagine 462.

The protein belongs to the cytochrome P450 family. Heme is required as a cofactor.

It functions in the pathway hormone biosynthesis. Functionally, cytochrome P450 monooxygenase; part of the gene cluster that mediates the biosynthesis of abscisic acid (ABA), a phytohormone that acts antagonistically toward salicylic acid (SA), jasmonic acid (JA) and ethylene (ETH) signaling, to impede plant defense responses. The first step of the pathway catalyzes the reaction from farnesyl diphosphate to alpha-ionylideneethane performed by the alpha-ionylideneethane synthase aba3 via a three-step reaction mechanism involving 2 neutral intermediates, beta-farnesene and allofarnesene. The cytochrome P450 monooxygenase aba1 might then be involved in the conversion of alpha-ionylideneethane to alpha-ionylideneacetic acid. Alpha-ionylideneacetic acid is further converted to abscisic acid in 2 steps involving the cytochrome P450 monooxygenase aba2 and the short-chain dehydrogenase/reductase aba4, via the intermediates 1'-deoxy-ABA or 1',4'-trans-diol-ABA, depending on the order of action of these 2 enzymes. Aba2 is responsible for the hydroxylation of carbon atom C-1' and aba4 might be involved in the oxidation of the C-4' carbon atom. This is Cytochrome P450 monooxygenase aba1 (aba1) from Botryotinia fuckeliana (strain B05.10) (Noble rot fungus).